An 870-amino-acid chain; its full sequence is DNA topoisomerase 1 (870 aa).

One can recognise a Toprim domain in the interval 1 to 128; the sequence is MKSPRFRHSQ…RVYKSSFEAA (128 aa). The Topo IA-type catalytic domain maps to 143–578; the sequence is YDGLAYSAKA…QTNAFVQKIT (436 aa). An interaction with DNA region spans residues 180-185; that stretch reads SSGRVQ. Tyr-299 serves as the catalytic O-(5'-phospho-DNA)-tyrosine intermediate. 3 consecutive C4-type zinc fingers follow at residues 603-627, 693-717, and 784-807; these read CQCP…HPNC, CPKC…QNGC, and CPLC…KRGC.

Belongs to the type IA topoisomerase family. In terms of assembly, monomer.

The catalysed reaction is ATP-independent breakage of single-stranded DNA, followed by passage and rejoining.. Releases the supercoiling and torsional tension of DNA, which is introduced during the DNA replication and transcription, by transiently cleaving and rejoining one strand of the DNA duplex. Introduces a single-strand break via transesterification at a target site in duplex DNA. The scissile phosphodiester is attacked by the catalytic tyrosine of the enzyme, resulting in the formation of a DNA-(5'-phosphotyrosyl)-enzyme intermediate and the expulsion of a 3'-OH DNA strand. The free DNA strand then undergoes passage around the unbroken strand, thus removing DNA supercoils. Finally, in the religation step, the DNA 3'-OH attacks the covalent intermediate to expel the active-site tyrosine and restore the DNA phosphodiester backbone. The polypeptide is DNA topoisomerase 1 (topX) (Bacillus anthracis).